Here is a 152-residue protein sequence, read N- to C-terminus: Transcriptional regulator MraZ (152 aa).

SpoVT-AbrB domains are found at residues 5-52 and 81-124; these read ASAI…PIHE and AHEV…DEQS.

This sequence belongs to the MraZ family. Forms oligomers.

It is found in the cytoplasm. Its subcellular location is the nucleoid. The polypeptide is Transcriptional regulator MraZ (Shewanella baltica (strain OS223)).